The sequence spans 470 residues: Solvent efflux pump outer membrane protein SrpC (470 aa).

The signal sequence occupies residues 1 to 16 (MKFKSLPMFALLMLGG). Residue C17 is the site of N-palmitoyl cysteine attachment. Residue C17 is the site of S-diacylglycerol cysteine attachment. A disordered region spans residues 104 to 123 (LDGQASGNRTRLPDDLSPTG).

Belongs to the outer membrane factor (OMF) (TC 1.B.17) family.

The protein localises to the cell outer membrane. The outer membrane component of an organic solvent efflux pump. Involved in export of a number of low log POW compounds including hexane (log POW 3.5), toluene (log POW 2.5) and dimethylphthalate (log POW 2.3). The solvent resistance phenotype has been postulated to depend on the operon expression level. The sequence is that of Solvent efflux pump outer membrane protein SrpC (srpC) from Pseudomonas putida (Arthrobacter siderocapsulatus).